Reading from the N-terminus, the 543-residue chain is Putative inorganic phosphate export protein YjbB (543 aa).

Transmembrane regions (helical) follow at residues 1 to 21 (MLTL…THIV), 48 to 68 (FCAG…TMLV), 76 to 96 (LVAL…TALM), 99 to 119 (ILTF…VIFF), 134 to 154 (GIGL…VTPI), 175 to 195 (ALIG…VLLT), 196 to 216 (ATLT…VIGA), 240 to 260 (LGSL…VHLL), and 274 to 294 (LVIY…LPFV).

Belongs to the YjbB family.

Its subcellular location is the cell inner membrane. The catalysed reaction is phosphate(in) = phosphate(out). Might be involved in phosphate export. Overproduction of YjbB reduces the elevated levels of polyphosphate (polyP) in a phoU mutant that accumulates 1000-fold higher levels of polyP than the wild type, suggesting that YjbB exports excess intracellular phosphate (Pi) in the phoU mutant and thus reduces the levels of polyP. This Escherichia coli (strain K12) protein is Putative inorganic phosphate export protein YjbB (yjbB).